The chain runs to 316 residues: Protoheme IX farnesyltransferase (316 aa).

Transmembrane regions (helical) follow at residues 32 to 52 (VMSL…GQIN), 53 to 73 (PVLG…SGAL), 93 to 113 (IPAG…LSCF), 116 to 136 (AILG…TIFF), 152 to 172 (NIVI…ACVT), 180 to 200 (TVLF…LALF), 226 to 246 (IVAY…LGFA), 248 to 268 (FAYG…SIAV), and 289 to 309 (IFYL…AMLV).

It belongs to the UbiA prenyltransferase family. Protoheme IX farnesyltransferase subfamily.

It localises to the cell inner membrane. The catalysed reaction is heme b + (2E,6E)-farnesyl diphosphate + H2O = Fe(II)-heme o + diphosphate. It participates in porphyrin-containing compound metabolism; heme O biosynthesis; heme O from protoheme: step 1/1. In terms of biological role, converts heme B (protoheme IX) to heme O by substitution of the vinyl group on carbon 2 of heme B porphyrin ring with a hydroxyethyl farnesyl side group. The protein is Protoheme IX farnesyltransferase of Rhizobium etli (strain CIAT 652).